The sequence spans 502 residues: Exodeoxyribonuclease 7 large subunit (502 aa).

Residues 474–495 (SAPSTTKKSAPKPAAPKAPKTP) are compositionally biased toward low complexity. Residues 474 to 502 (SAPSTTKKSAPKPAAPKAPKTPGEQGSLF) are disordered.

The protein belongs to the XseA family. In terms of assembly, heterooligomer composed of large and small subunits.

It is found in the cytoplasm. The catalysed reaction is Exonucleolytic cleavage in either 5'- to 3'- or 3'- to 5'-direction to yield nucleoside 5'-phosphates.. Its function is as follows. Bidirectionally degrades single-stranded DNA into large acid-insoluble oligonucleotides, which are then degraded further into small acid-soluble oligonucleotides. The sequence is that of Exodeoxyribonuclease 7 large subunit from Ruegeria sp. (strain TM1040) (Silicibacter sp.).